We begin with the raw amino-acid sequence, 732 residues long: 1,4-alpha-glucan branching enzyme GlgB 1 (732 aa).

Residue Asp-411 is the Nucleophile of the active site. Glu-464 acts as the Proton donor in catalysis.

This sequence belongs to the glycosyl hydrolase 13 family. GlgB subfamily. As to quaternary structure, monomer.

It carries out the reaction Transfers a segment of a (1-&gt;4)-alpha-D-glucan chain to a primary hydroxy group in a similar glucan chain.. Its pathway is glycan biosynthesis; glycogen biosynthesis. Its function is as follows. Catalyzes the formation of the alpha-1,6-glucosidic linkages in glycogen by scission of a 1,4-alpha-linked oligosaccharide from growing alpha-1,4-glucan chains and the subsequent attachment of the oligosaccharide to the alpha-1,6 position. The sequence is that of 1,4-alpha-glucan branching enzyme GlgB 1 from Xanthomonas oryzae pv. oryzae (strain KACC10331 / KXO85).